A 217-amino-acid chain; its full sequence is Protein GrpE (217 aa).

Residues 1 to 10 are compositionally biased toward basic and acidic residues; that stretch reads MSDHAEHAAD. The tract at residues 1–39 is disordered; it reads MSDHAEHAADAADTDAPEGDDAGGDDGEQAGDDGTSALS. Residues 12–31 are compositionally biased toward acidic residues; sequence ADTDAPEGDDAGGDDGEQAG.

It belongs to the GrpE family. As to quaternary structure, homodimer.

The protein resides in the cytoplasm. Participates actively in the response to hyperosmotic and heat shock by preventing the aggregation of stress-denatured proteins, in association with DnaK and GrpE. It is the nucleotide exchange factor for DnaK and may function as a thermosensor. Unfolded proteins bind initially to DnaJ; upon interaction with the DnaJ-bound protein, DnaK hydrolyzes its bound ATP, resulting in the formation of a stable complex. GrpE releases ADP from DnaK; ATP binding to DnaK triggers the release of the substrate protein, thus completing the reaction cycle. Several rounds of ATP-dependent interactions between DnaJ, DnaK and GrpE are required for fully efficient folding. The polypeptide is Protein GrpE (Halobacterium salinarum (strain ATCC 29341 / DSM 671 / R1)).